Here is a 558-residue protein sequence, read N- to C-terminus: Type I restriction enzyme MjaIX methylase subunit (558 aa).

Residues 1-37 are disordered; the sequence is MATLDKFLSIKENDEKTKKKESKKKSSKSNKTSESLV. A compositionally biased stretch (basic and acidic residues) spans 8–18; sequence LSIKENDEKTK. Residues 19–28 show a composition bias toward basic residues; the sequence is KKESKKKSSK. S-adenosyl-L-methionine contacts are provided by residues 227-232, 256-258, and D283; these read KFYTPR and SGG.

It belongs to the N(4)/N(6)-methyltransferase family. The type I restriction/modification system is composed of three polypeptides R, M and S.

The enzyme catalyses a 2'-deoxyadenosine in DNA + S-adenosyl-L-methionine = an N(6)-methyl-2'-deoxyadenosine in DNA + S-adenosyl-L-homocysteine + H(+). In terms of biological role, the subtype gamma methyltransferase (M) subunit of a type I restriction enzyme. The M and S subunits together form a methyltransferase (MTase) that methylates A-3 on the top and A-2 on the bottom strand of the sequence 5'-CCAN(5)GTR-3'. In the presence of the R subunit the complex can also act as an endonuclease, binding to the same target sequence but cutting the DNA some distance from this site. Whether the DNA is cut or modified depends on the methylation state of the target sequence. When the target site is unmodified, the DNA is cut. When the target site is hemimethylated, the complex acts as a maintenance MTase modifying the DNA so that both strands become methylated. After locating a non-methylated recognition site, the enzyme complex serves as a molecular motor that translocates DNA in an ATP-dependent manner until a collision occurs that triggers cleavage. In Methanocaldococcus jannaschii (strain ATCC 43067 / DSM 2661 / JAL-1 / JCM 10045 / NBRC 100440) (Methanococcus jannaschii), this protein is Type I restriction enzyme MjaIX methylase subunit.